The chain runs to 236 residues: Leucyl/phenylalanyl-tRNA--protein transferase (236 aa).

The protein belongs to the L/F-transferase family.

Its subcellular location is the cytoplasm. It carries out the reaction N-terminal L-lysyl-[protein] + L-leucyl-tRNA(Leu) = N-terminal L-leucyl-L-lysyl-[protein] + tRNA(Leu) + H(+). The enzyme catalyses N-terminal L-arginyl-[protein] + L-leucyl-tRNA(Leu) = N-terminal L-leucyl-L-arginyl-[protein] + tRNA(Leu) + H(+). The catalysed reaction is L-phenylalanyl-tRNA(Phe) + an N-terminal L-alpha-aminoacyl-[protein] = an N-terminal L-phenylalanyl-L-alpha-aminoacyl-[protein] + tRNA(Phe). Functionally, functions in the N-end rule pathway of protein degradation where it conjugates Leu, Phe and, less efficiently, Met from aminoacyl-tRNAs to the N-termini of proteins containing an N-terminal arginine or lysine. The protein is Leucyl/phenylalanyl-tRNA--protein transferase of Shewanella oneidensis (strain ATCC 700550 / JCM 31522 / CIP 106686 / LMG 19005 / NCIMB 14063 / MR-1).